The chain runs to 70 residues: DNA-directed RNA polymerase subunit epsilon (70 aa).

The protein belongs to the RNA polymerase subunit epsilon family. In terms of assembly, RNAP is composed of a core of 2 alpha, a beta and a beta' subunit. The core is associated with a delta subunit, and at least one of epsilon or omega. When a sigma factor is associated with the core the holoenzyme is formed, which can initiate transcription.

The enzyme catalyses RNA(n) + a ribonucleoside 5'-triphosphate = RNA(n+1) + diphosphate. Its function is as follows. A non-essential component of RNA polymerase (RNAP). This is DNA-directed RNA polymerase subunit epsilon from Bacillus cytotoxicus (strain DSM 22905 / CIP 110041 / 391-98 / NVH 391-98).